The sequence spans 204 residues: Urease accessory protein UreG 1 (204 aa).

A GTP-binding site is contributed by 14 to 21 (GPVGSGKT).

The protein belongs to the SIMIBI class G3E GTPase family. UreG subfamily. As to quaternary structure, homodimer. UreD, UreF and UreG form a complex that acts as a GTP-hydrolysis-dependent molecular chaperone, activating the urease apoprotein by helping to assemble the nickel containing metallocenter of UreC. The UreE protein probably delivers the nickel.

It localises to the cytoplasm. Its function is as follows. Facilitates the functional incorporation of the urease nickel metallocenter. This process requires GTP hydrolysis, probably effectuated by UreG. The sequence is that of Urease accessory protein UreG 1 from Methylorubrum populi (strain ATCC BAA-705 / NCIMB 13946 / BJ001) (Methylobacterium populi).